We begin with the raw amino-acid sequence, 187 residues long: Interferon beta (187 aa).

The signal sequence occupies residues 1 to 21 (MTNKCLLQIALLLCFSTTALS). Tyrosine 24 is modified (phosphotyrosine). Cysteine 52 and cysteine 162 are disulfide-bonded. The N-linked (GlcNAc...) asparagine glycan is linked to asparagine 101.

It belongs to the alpha/beta interferon family. In terms of assembly, monomer.

It is found in the secreted. Its function is as follows. Type I interferon cytokine that plays a key role in the innate immune response to infection, developing tumors and other inflammatory stimuli. Signals via binding to high-affinity (IFNAR2) and low-affinity (IFNAR1) heterodimeric receptor, activating the canonical Jak-STAT signaling pathway resulting in transcriptional activation or repression of interferon-regulated genes that encode the effectors of the interferon response, such as antiviral proteins, regulators of cell proliferation and differentiation, and immunoregulatory proteins. Signals mostly via binding to a IFNAR1-IFNAR2 heterodimeric receptor, but can also function with IFNAR1 alone and independently of Jak-STAT pathways. Elicits a wide variety of responses, including antiviral and antibacterial activities, and can regulate the development of B-cells, myelopoiesis and lipopolysaccharide (LPS)-inducible production of tumor necrosis factor. Plays a role in neuronal homeostasis by regulating dopamine turnover and protecting dopaminergic neurons: acts by promoting neuronal autophagy and alpha-synuclein clearance, thereby preventing dopaminergic neuron loss. IFNB1 is more potent than interferon-alpha (IFN-alpha) in inducing the apoptotic and antiproliferative pathways required for control of tumor cell growth. The chain is Interferon beta from Homo sapiens (Human).